Here is a 158-residue protein sequence, read N- to C-terminus: Large ribosomal subunit protein uL13 (158 aa).

The tract at residues 129–158 is disordered; sequence PEHGHHAQKPVALDFGAMNNKNGRGNNAGR. Positions 144–158 are enriched in low complexity; the sequence is GAMNNKNGRGNNAGR.

This sequence belongs to the universal ribosomal protein uL13 family. Part of the 50S ribosomal subunit.

In terms of biological role, this protein is one of the early assembly proteins of the 50S ribosomal subunit, although it is not seen to bind rRNA by itself. It is important during the early stages of 50S assembly. This chain is Large ribosomal subunit protein uL13, found in Anaplasma phagocytophilum (strain HZ).